The primary structure comprises 147 residues: Hemoglobin subunit beta (147 aa).

At valine 2 the chain carries N-acetylvaline. The Globin domain occupies 3–147 (HLSGEEKSAV…VANALAHKYH (145 aa)). Phosphothreonine is present on threonine 13. Phosphoserine is present on serine 45. Lysine 60 carries the N6-acetyllysine modification. Histidine 64 provides a ligand contact to heme b. Lysine 83 carries the N6-acetyllysine modification. Histidine 93 lines the heme b pocket. The residue at position 94 (cysteine 94) is an S-nitrosocysteine. The residue at position 145 (lysine 145) is an N6-acetyllysine.

The protein belongs to the globin family. As to quaternary structure, heterotetramer of two alpha chains and two beta chains. As to expression, red blood cells.

Functionally, involved in oxygen transport from the lung to the various peripheral tissues. In Lepus europaeus (European hare), this protein is Hemoglobin subunit beta (HBB).